Here is a 262-residue protein sequence, read N- to C-terminus: Aminoglycoside (3'') (9) adenylyltransferase (262 aa).

It catalyses the reaction streptomycin + ATP = 3''-O-adenylylstreptomycin + diphosphate. The catalysed reaction is spectinomycin + ATP = 9-O-adenylylspectinomycin + diphosphate. Functionally, mediates bacterial resistance to the antibiotics streptomycin and spectinomycin. In Shigella flexneri, this protein is Aminoglycoside (3'') (9) adenylyltransferase.